A 201-amino-acid chain; its full sequence is Large ribosomal subunit protein uL4 (201 aa).

The interval 44–68 (KAQKTRSEVAGTTKKSKKQKGGGAR) is disordered.

Belongs to the universal ribosomal protein uL4 family. As to quaternary structure, part of the 50S ribosomal subunit.

One of the primary rRNA binding proteins, this protein initially binds near the 5'-end of the 23S rRNA. It is important during the early stages of 50S assembly. It makes multiple contacts with different domains of the 23S rRNA in the assembled 50S subunit and ribosome. Functionally, forms part of the polypeptide exit tunnel. In Xanthomonas axonopodis pv. citri (strain 306), this protein is Large ribosomal subunit protein uL4.